The following is a 218-amino-acid chain: MNLFSFLGDMLHLGSMLILLFKIKNDKSCAGVSLKSQILFTIVFTARYLDLFTNYVSLYITFMKITYIAVSYYTLHLIARKYKFTYDKDHDTFKIVYLIASCAILSLITYDKTTIGIYSTFLEILWTFSIYLESIAILPQLILLQRTGEVEALTSNYIVLLGGYRAFYLFNWIYRITFYNWSGKIEMLSGLLQTILYADFFYYYAKSRMYGKKLVLPQ.

Residues 1–2 are Lumenal-facing; the sequence is MN. A helical membrane pass occupies residues 3 to 23; that stretch reads LFSFLGDMLHLGSMLILLFKI. Over 24–57 the chain is Cytoplasmic; sequence KNDKSCAGVSLKSQILFTIVFTARYLDLFTNYVS. A helical membrane pass occupies residues 58–78; sequence LYITFMKITYIAVSYYTLHLI. Residues 79–94 lie on the Lumenal side of the membrane; that stretch reads ARKYKFTYDKDHDTFK. Residues 95-115 traverse the membrane as a helical segment; the sequence is IVYLIASCAILSLITYDKTTI. Over 116–123 the chain is Cytoplasmic; that stretch reads GIYSTFLE. The chain crosses the membrane as a helical span at residues 124-144; the sequence is ILWTFSIYLESIAILPQLILL. Over 145–152 the chain is Lumenal; the sequence is QRTGEVEA. Residues 153–173 form a helical membrane-spanning segment; the sequence is LTSNYIVLLGGYRAFYLFNWI. Over 174 to 184 the chain is Cytoplasmic; the sequence is YRITFYNWSGK. The chain crosses the membrane as a helical span at residues 185 to 205; that stretch reads IEMLSGLLQTILYADFFYYYA. Topologically, residues 206 to 218 are lumenal; that stretch reads KSRMYGKKLVLPQ.

The protein belongs to the ERD2 family.

The protein resides in the endoplasmic reticulum membrane. Functionally, required for the retention of luminal endoplasmic reticulum proteins. Determines the specificity of the luminal ER protein retention system. Also required for normal vesicular traffic through the Golgi. The polypeptide is ER lumen protein-retaining receptor (kdelr) (Dictyostelium discoideum (Social amoeba)).